Here is a 223-residue protein sequence, read N- to C-terminus: MKTLGVLFIAAWFIACTHSFPGAHDEDSKEERKNVDTVLVLPSIERDQMMAATFDFPSLSFEDSDEGSNWNWNTLLRPNFLDGWYQTLQSAISAHMKKVREQMAGILSRIPEQGVVNWNKIPEGANTTSTTKIIDGHVVTINETTYTDGSDDYSTLIRVRVIDVRPQNETILTTVSSEADSDVTTLPTLIGKNETSTQSSRSVESVEDFDNEIPKNQGDVLTA.

An N-terminal signal peptide occupies residues 1–19; the sequence is MKTLGVLFIAAWFIACTHS. N-linked (GlcNAc...) asparagine glycosylation is found at Asn126, Asn142, Asn168, and Asn193. Residues 186 to 203 are compositionally biased toward polar residues; sequence LPTLIGKNETSTQSSRSV. Positions 186–223 are disordered; sequence LPTLIGKNETSTQSSRSVESVEDFDNEIPKNQGDVLTA.

In terms of tissue distribution, expressed by the venom duct.

The protein resides in the secreted. In Apis mellifera carnica (Carniolan honeybee), this protein is Icarapin.